Reading from the N-terminus, the 655-residue chain is FYVE, RhoGEF and PH domain-containing protein 2 (655 aa).

Ser-10, Ser-39, and Ser-47 each carry phosphoserine. Disordered stretches follow at residues 21 to 52 (NRTPGEAPGSHSLEDQPHSPEHQLSLSPEPWE) and 84 to 103 (WRRSCQPGVSPGPETQEPEE). Residues 32 to 41 (SLEDQPHSPE) are compositionally biased toward basic and acidic residues. Residues 102–290 (EEKRVVRELL…FSAAQHSNAA (189 aa)) form the DH domain. The PH 1 domain occupies 319 to 418 (TLLREGPVLK…WMQACQAAID (100 aa)). The segment at 458 to 518 (DKMVTMCMRC…VCLTCYTFLT (61 aa)) adopts an FYVE-type zinc-finger fold. Zn(2+) contacts are provided by Cys-464, Cys-467, Cys-481, Cys-484, Cys-489, Cys-492, Cys-510, and Cys-513. The PH 2 domain maps to 544–641 (QSLVCSFLQL…WVTAIKRAAS (98 aa)). Thr-644 is subject to Phosphothreonine. Ser-654 carries the phosphoserine modification.

As to expression, lymph node, spleen, B-lymphocytes and macrophages (at protein level). Expressed at high levels in lymph node, spleen, B-lymphocytes and bone marrow macrophages. Expressed at lower levels in mature bone marrow dendritic cells. In both immature and mature B-cells, expression is down-regulated by prior B-cell receptor signaling. Expression remains high in resting B and memory cells but declines upon differentiation into plasma cells.

Its subcellular location is the cytoplasm. It is found in the nucleus. The protein localises to the early endosome. The protein resides in the early endosome membrane. It localises to the cell projection. Its subcellular location is the ruffle membrane. It is found in the cytoskeleton. Activates CDC42, a member of the Ras-like family of Rho- and Rac proteins, by exchanging bound GDP for free GTP. Activates JNK1 via CDC42 but not RAC1. Binds to phosphatidylinositol 4,5-bisphosphate, phosphatidylinositol 3,4,5-trisphosphate, phosphatidylinositol 5-monophosphate, phosphatidylinositol 4-monophosphate and phosphatidylinositol 3-monophosphate. This is FYVE, RhoGEF and PH domain-containing protein 2 (Fgd2) from Mus musculus (Mouse).